The sequence spans 137 residues: Nucleoside diphosphate kinase (137 aa).

ATP is bound by residues lysine 9, phenylalanine 57, arginine 85, threonine 91, arginine 102, and asparagine 112. Residue histidine 115 is the Pros-phosphohistidine intermediate of the active site.

It belongs to the NDK family. In terms of assembly, homotetramer. The cofactor is Mg(2+).

The protein resides in the cytoplasm. The enzyme catalyses a 2'-deoxyribonucleoside 5'-diphosphate + ATP = a 2'-deoxyribonucleoside 5'-triphosphate + ADP. The catalysed reaction is a ribonucleoside 5'-diphosphate + ATP = a ribonucleoside 5'-triphosphate + ADP. Functionally, major role in the synthesis of nucleoside triphosphates other than ATP. The ATP gamma phosphate is transferred to the NDP beta phosphate via a ping-pong mechanism, using a phosphorylated active-site intermediate. In Leptospira biflexa serovar Patoc (strain Patoc 1 / ATCC 23582 / Paris), this protein is Nucleoside diphosphate kinase.